Consider the following 127-residue polypeptide: Cliotide T3 (127 aa).

An N-terminal signal peptide occupies residues M1 to G24. The segment at residues G25–N53 is a cross-link (cyclopeptide (Gly-Asn)). Intrachain disulfides connect C29-C43, C33-C45, and C38-C50. Residues H54 to N127 constitute a propeptide, removed in mature form.

In terms of processing, contains 3 disulfide bonds. This is a cyclic peptide. In terms of tissue distribution, expressed in flower, stem, shoot, leaf and seed but not in root, pod and nodule (at protein level).

In terms of biological role, probably participates in a plant defense mechanism. Not active against Gram-negative bacteria E.coli ATCC 700926, K.pneumoniae ATTC 13883 and P.aeruginosa ATCC 39018 at concentration up to 100 uM. Has cytotoxic and hemolytic activity. This is Cliotide T3 from Clitoria ternatea (Butterfly pea).